The following is a 424-amino-acid chain: Anaerobic glycerol-3-phosphate dehydrogenase subunit B (424 aa).

Belongs to the anaerobic G-3-P dehydrogenase subunit B family. In terms of assembly, composed of a catalytic GlpA/B dimer and of membrane bound GlpC. FMN serves as cofactor.

The enzyme catalyses a quinone + sn-glycerol 3-phosphate = dihydroxyacetone phosphate + a quinol. The protein operates within polyol metabolism; glycerol degradation via glycerol kinase pathway; glycerone phosphate from sn-glycerol 3-phosphate (anaerobic route): step 1/1. In terms of biological role, conversion of glycerol 3-phosphate to dihydroxyacetone. Uses fumarate or nitrate as electron acceptor. This Yersinia pestis bv. Antiqua (strain Antiqua) protein is Anaerobic glycerol-3-phosphate dehydrogenase subunit B.